A 339-amino-acid polypeptide reads, in one-letter code: Protein-arginine kinase (339 aa).

The Phosphagen kinase C-terminal domain maps to 14-242 (IVINSNISLS…LNVISEEKKF (229 aa)). Residues 17-21 (NSNIS), 164-168 (RASVN), and 195-200 (KGLYEE) each bind ATP.

The protein belongs to the ATP:guanido phosphotransferase family.

It carries out the reaction L-arginyl-[protein] + ATP = N(omega)-phospho-L-arginyl-[protein] + ADP + H(+). Catalyzes the specific phosphorylation of arginine residues in proteins. This chain is Protein-arginine kinase, found in Clostridium botulinum (strain Eklund 17B / Type B).